The chain runs to 992 residues: MVTRTRPVAAMAVRSRSSSRTGTAYLLLVLCEVSWAQIFSFPFRRPETCDFNQYFDISALSCAPCGANQRRDALGTSCVCLPGYHMISNNGGPSIICKKCPENMKGVTKDGWDCISCPSGLTAEGKCHCPTGHILVERNVSGSLLAQATCELCDESENSFTKANALGTRCVRCEPTFVNTSRSCSCSEPHTLTGGLCFSNTGNFHQRVISTARYGELGMSLNSEWFAKYLQATAAACWTHANLTSCQALGNMCVMNMNSYDSTTLDACRLFHYIFESTAGLISVHSVPFWRQNLPWLFYGDQPGLAPQVLSTTPLPTNFSFKGQNQLKFVAASYDIRGNFIKWQPLEGGVLQLCPDTERRLDAAYAFGTTYQQNCEISLSKLLVDFSSPVFYDVYLEYTDEEQHRYLWPIPVLNLNLQHNKLFVNQDSSSSKWLLTRRIFLVDAVSGRENDLGNQPRVIRVATQISLSIRLVPNTKNGNIYTPLLTIAYSDIDIKNAHSQSAKISFSVKYEMNQGDASVHTDIALGVLGGLAVLSSLLKTAGWKRRVGSPMIDLQTVMKFLLYYAGDLANVFFIITVGTGLYWLIFFKAQKSVSVLLPMPVQEERFVTYVGCAFAMKALQFLHKFISQISIDIFFIDWERPKGKVLKAVEGEGGVRSATVPVSIWRTYFVANEWNEIQTVRKINPLFQVLTTLFFLEVVGFKNLALMDSSSSLSRNPSDYTAPYSRILRYAVATAIWLVIGIIQVVFFAAFYERFIEDKIRQFVDLCSMSNVSVFLLSHRCFGYYIHGRSVHGHADTNMEEMNMNLKREAENLCSQRGLVPNTDGQTFQIAVSSQMRQHYDRIHETLTRRNGPARLLSSSGSTFEQSIKAYHAMNKFLGSFIDHVHKEMDYFIKDKLLLERILGMEFMEPMEKSIFYNDEGHSFSSVLYYGNEATLLIFDLLFFCVVDLACQDFVLASFLTYLQQEIFRFIRNTVGQKNLATKTLVDERFLI.

The first 36 residues, 1 to 36 (MVTRTRPVAAMAVRSRSSSRTGTAYLLLVLCEVSWA), serve as a signal peptide directing secretion. Residues 37–280 (QIFSFPFRRP…FHYIFESTAG (244 aa)) are cysteine-rich. Topologically, residues 37-516 (QIFSFPFRRP…SVKYEMNQGD (480 aa)) are extracellular. 12 disulfide bridges follow: cysteine 49–cysteine 62, cysteine 65–cysteine 78, cysteine 80–cysteine 97, cysteine 100–cysteine 114, cysteine 117–cysteine 127, cysteine 129–cysteine 150, cysteine 153–cysteine 170, cysteine 173–cysteine 184, cysteine 186–cysteine 197, cysteine 237–cysteine 246, cysteine 253–cysteine 268, and cysteine 354–cysteine 375. Asparagine 242 carries N-linked (GlcNAc...) asparagine glycosylation. The chain crosses the membrane as a helical span at residues 517-545 (ASVHTDIALGVLGGLAVLSSLLKTAGWKR). At 546-555 (RVGSPMIDLQ) the chain is on the cytoplasmic side. Residues 556–587 (TVMKFLLYYAGDLANVFFIITVGTGLYWLIFF) traverse the membrane as a helical segment. Topologically, residues 588-600 (KAQKSVSVLLPMP) are extracellular. The chain crosses the membrane as a helical span at residues 601 to 628 (VQEERFVTYVGCAFAMKALQFLHKFISQ). At 629 to 667 (ISIDIFFIDWERPKGKVLKAVEGEGGVRSATVPVSIWRT) the chain is on the cytoplasmic side. The segment at residues 668-676 (YFVANEWNE) is an intramembrane region (helical). Residues 668 to 698 (YFVANEWNEIQTVRKINPLFQVLTTLFFLEV) traverse the membrane as a discontinuously helical segment. An intramembrane segment occupies 677–685 (IQTVRKINP). Residues 686 to 698 (LFQVLTTLFFLEV) constitute an intramembrane region (helical). Residues 699-728 (VGFKNLALMDSSSSLSRNPSDYTAPYSRIL) are Extracellular-facing. Residues 729–754 (RYAVATAIWLVIGIIQVVFFAAFYER) constitute an intramembrane region (helical). Residues 729–768 (RYAVATAIWLVIGIIQVVFFAAFYERFIEDKIRQFVDLCS) traverse the membrane as a discontinuously helical segment. An intramembrane segment occupies 755 to 759 (FIEDK). Positions 760–768 (IRQFVDLCS) form an intramembrane region, helical. The Cytoplasmic segment spans residues 769-923 (MSNVSVFLLS…SIFYNDEGHS (155 aa)). The segment at residues 924 to 926 (FSS) is an intramembrane region (helical). The discontinuously helical transmembrane segment at 924-949 (FSSVLYYGNEATLLIFDLLFFCVVDL) threads the bilayer. An intramembrane segment occupies 927-933 (VLYYGNE). Positions 934–949 (ATLLIFDLLFFCVVDL) form an intramembrane region, helical. The Extracellular segment spans residues 950 to 954 (ACQDF). A helical transmembrane segment spans residues 955–982 (VLASFLTYLQQEIFRFIRNTVGQKNLAT). The Cytoplasmic portion of the chain corresponds to 983–992 (KTLVDERFLI).

In terms of assembly, homodimer. Part of the tectonic-like complex (also named B9 complex). Interacts with DNAJB9, DNAJC10 and mutated SFTPC. Interacts with SYNE2 during the early establishment of cell polarity. Interacts (via C-terminus) with FLNA. Interacts with TMEM218. Interacts with WNT5A. Interacts with ROR2.

The protein resides in the cell membrane. It localises to the endoplasmic reticulum membrane. Its subcellular location is the cytoplasm. It is found in the cytoskeleton. The protein localises to the cilium basal body. In terms of biological role, part of the tectonic-like complex which is required for tissue-specific ciliogenesis and may regulate ciliary membrane composition. Involved in centrosome migration to the apical cell surface during early ciliogenesis. Required for ciliary structure and function, including a role in regulating length and appropriate number through modulating centrosome duplication. Is a key regulator of stereociliary bundle orientation. Required for epithelial cell branching morphology. Essential for endoplasmic reticulum-associated degradation (ERAD) of surfactant protein C (sftpc). Involved in the negative regulation of canonical Wnt signaling, and activation of the non-canonical cascade stimulated by WNT5A. In non-canonical Wnt signaling, it may act as ROR2 coreceptor. The protein is Meckelin (Tmem67) of Mus musculus (Mouse).